The following is a 61-amino-acid chain: Large ribosomal subunit protein bL32 (61 aa).

A disordered region spans residues methionine 1–aspartate 20. Positions lysine 7–histidine 19 are enriched in basic residues.

This sequence belongs to the bacterial ribosomal protein bL32 family.

The sequence is that of Large ribosomal subunit protein bL32 from Buchnera aphidicola subsp. Cinara cedri (strain Cc).